Consider the following 276-residue polypeptide: 3-methyl-2-oxobutanoate hydroxymethyltransferase (276 aa).

The Mg(2+) site is built by Asp50 and Asp89. Residues 50–51 (DS), Asp89, and Lys119 each bind 3-methyl-2-oxobutanoate. Glu121 is a Mg(2+) binding site. Glu188 serves as the catalytic Proton acceptor.

The protein belongs to the PanB family. In terms of assembly, homodecamer; pentamer of dimers. The cofactor is Mg(2+).

Its subcellular location is the cytoplasm. It carries out the reaction 3-methyl-2-oxobutanoate + (6R)-5,10-methylene-5,6,7,8-tetrahydrofolate + H2O = 2-dehydropantoate + (6S)-5,6,7,8-tetrahydrofolate. Its pathway is cofactor biosynthesis; (R)-pantothenate biosynthesis; (R)-pantoate from 3-methyl-2-oxobutanoate: step 1/2. Its function is as follows. Catalyzes the reversible reaction in which hydroxymethyl group from 5,10-methylenetetrahydrofolate is transferred onto alpha-ketoisovalerate to form ketopantoate. This chain is 3-methyl-2-oxobutanoate hydroxymethyltransferase, found in Paracoccus denitrificans (strain Pd 1222).